Here is a 227-residue protein sequence, read N- to C-terminus: DNA repair protein RecO (227 aa).

It belongs to the RecO family.

Functionally, involved in DNA repair and RecF pathway recombination. The polypeptide is DNA repair protein RecO (Pseudomonas putida (strain ATCC 700007 / DSM 6899 / JCM 31910 / BCRC 17059 / LMG 24140 / F1)).